A 211-amino-acid chain; its full sequence is Protein-L-isoaspartate O-methyltransferase (211 aa).

Serine 62 is an active-site residue.

It belongs to the methyltransferase superfamily. L-isoaspartyl/D-aspartyl protein methyltransferase family.

It localises to the cytoplasm. It carries out the reaction [protein]-L-isoaspartate + S-adenosyl-L-methionine = [protein]-L-isoaspartate alpha-methyl ester + S-adenosyl-L-homocysteine. Its function is as follows. Catalyzes the methyl esterification of L-isoaspartyl residues in peptides and proteins that result from spontaneous decomposition of normal L-aspartyl and L-asparaginyl residues. It plays a role in the repair and/or degradation of damaged proteins. This Shewanella sp. (strain ANA-3) protein is Protein-L-isoaspartate O-methyltransferase.